Consider the following 274-residue polypeptide: Leucyl/phenylalanyl-tRNA--protein transferase (274 aa).

It belongs to the L/F-transferase family.

The protein localises to the cytoplasm. The catalysed reaction is N-terminal L-lysyl-[protein] + L-leucyl-tRNA(Leu) = N-terminal L-leucyl-L-lysyl-[protein] + tRNA(Leu) + H(+). It catalyses the reaction N-terminal L-arginyl-[protein] + L-leucyl-tRNA(Leu) = N-terminal L-leucyl-L-arginyl-[protein] + tRNA(Leu) + H(+). It carries out the reaction L-phenylalanyl-tRNA(Phe) + an N-terminal L-alpha-aminoacyl-[protein] = an N-terminal L-phenylalanyl-L-alpha-aminoacyl-[protein] + tRNA(Phe). Its function is as follows. Functions in the N-end rule pathway of protein degradation where it conjugates Leu, Phe and, less efficiently, Met from aminoacyl-tRNAs to the N-termini of proteins containing an N-terminal arginine or lysine. The sequence is that of Leucyl/phenylalanyl-tRNA--protein transferase from Psychrobacter cryohalolentis (strain ATCC BAA-1226 / DSM 17306 / VKM B-2378 / K5).